A 271-amino-acid chain; its full sequence is Thiazole synthase (271 aa).

Lys-108 functions as the Schiff-base intermediate with DXP in the catalytic mechanism. 1-deoxy-D-xylulose 5-phosphate is bound by residues Gly-169, 195 to 196 (AG), and 217 to 218 (NS).

The protein belongs to the ThiG family. As to quaternary structure, homotetramer. Forms heterodimers with either ThiH or ThiS.

The protein localises to the cytoplasm. The enzyme catalyses [ThiS sulfur-carrier protein]-C-terminal-Gly-aminoethanethioate + 2-iminoacetate + 1-deoxy-D-xylulose 5-phosphate = [ThiS sulfur-carrier protein]-C-terminal Gly-Gly + 2-[(2R,5Z)-2-carboxy-4-methylthiazol-5(2H)-ylidene]ethyl phosphate + 2 H2O + H(+). Its pathway is cofactor biosynthesis; thiamine diphosphate biosynthesis. Its function is as follows. Catalyzes the rearrangement of 1-deoxy-D-xylulose 5-phosphate (DXP) to produce the thiazole phosphate moiety of thiamine. Sulfur is provided by the thiocarboxylate moiety of the carrier protein ThiS. In vitro, sulfur can be provided by H(2)S. In Prochlorococcus marinus (strain SARG / CCMP1375 / SS120), this protein is Thiazole synthase.